We begin with the raw amino-acid sequence, 89 residues long: HssA/B-like protein 16 (89 aa).

The protein belongs to the hssA/B family.

This is HssA/B-like protein 16 (hssl16) from Dictyostelium discoideum (Social amoeba).